The following is a 773-amino-acid chain: MRNPFLTFRAPTRKTGDYLVSKFVKKDNFSSLRLARAYTFSTRSTAVSQFSLLSLSQRSFQSLKINKGIPEKHKIPLISSKQFSVTSKRSQNGSSGSNSDANGRKNGQKNDDSKKKGLNGNDPKKVFEIALNGNTILGGILVAYILYNVLSPNANMQEITWQDFRQQFLDKGLVERLVVVNRNMVRVILRGGVASGSGQYYFSIGSIDSFDRKLEDAQRQLGIPPSEFVPVAYHDEVSVLATLLSFAPTLLIIGSVIYLSRRASGAAGGGQGGIFGIGKSRAKMFNHETDIKIKFADVAGVDEAKEEIMEFVKFLKNPKFYERLGAKIPRGAILSGPPGTGKTLLAKATAGEANVPFLSVSGSEFLEMFVGVGPSRVRDLFATARKNAPCIIFIDEIDAIGKARGRGGQFGSNDERESTLNQLLVEMDGFTSSEHIVVFAGTNRPDVLDPALLRPGRFDRQITIDRPDIGGREQIFKVHLKHIKAADNIDLIAKRLAVLTSGFTGADIMNVCNEGALIAARSNSNEVQMVHFEQAIERVTAGLEKKSRVLSPEEKNTVAHHEAGHAVAGWFMEYVDPLLKVSIIPRAQALGYASYLPKDQYLMSRGQILDQMGMALAGRVSEEIFFGPEKITSGASDDFQKVTRMAQAYVTQYGMSPTVGTIAYPIDTRETVQKPFSEATAQMIDEEIRKLVKHAYERTKKLLLEHKQGLENIAQRLLQKEVITYNEVETILGPRPYAYKHLNISELMRQSEYKNDHDPRNPPIPPSPQQPSA.

The segment at 83 to 119 is disordered; the sequence is FSVTSKRSQNGSSGSNSDANGRKNGQKNDDSKKKGLN. Residues 87-101 show a composition bias toward low complexity; that stretch reads SKRSQNGSSGSNSDA. Helical transmembrane passes span 126–146 and 239–259; these read VFEI…AYIL and VLAT…VIYL. ATP contacts are provided by V298, A299, T340, G341, K342, T343, L344, and H479. H561 contacts Zn(2+). E562 is an active-site residue. 2 residues coordinate Zn(2+): H565 and D638. The tract at residues 752 to 773 is disordered; the sequence is EYKNDHDPRNPPIPPSPQQPSA. Residues 761 to 773 are compositionally biased toward pro residues; it reads NPPIPPSPQQPSA.

The protein in the N-terminal section; belongs to the AAA ATPase family. This sequence in the C-terminal section; belongs to the peptidase M41 family. In terms of assembly, component of the m-AAA protease complex. Zn(2+) is required as a cofactor.

Its subcellular location is the mitochondrion membrane. The catalysed reaction is ATP + H2O = ADP + phosphate + H(+). Functionally, catalytic component of the m-AAA protease, a protease that plays a key role in proteostasis of inner mitochondrial membrane proteins. Possesses both ATPase and protease activities: the ATPase activity is required to unfold substrates, threading them into the internal proteolytic cavity for hydrolysis into small peptide fragments. The complex is necessary for the assembly of mitochondrial respiratory chain and ATPase complexes. The m-AAA protease carries out protein quality control in the inner membrane of the mitochondria by mediating degradation of mistranslated or misfolded polypeptides. It also mediates protein maturation of the mitochondrial ribosomal subunit mrpl32/bL32m by catalyzing the cleavage of the presequence of mrpl32/bL32m prior to assembly into the mitochondrial ribosome. Also acts as a membrane protein dislocase: required to dislocate moderately hydrophobic transmembrane segments from the membrane. The chain is Mitochondrial inner membrane m-AAA protease component yta12 (yta12) from Schizosaccharomyces pombe (strain 972 / ATCC 24843) (Fission yeast).